Consider the following 216-residue polypeptide: Probable transaldolase (216 aa).

Residue Lys-83 is the Schiff-base intermediate with substrate of the active site.

It belongs to the transaldolase family. Type 3B subfamily.

It localises to the cytoplasm. The catalysed reaction is D-sedoheptulose 7-phosphate + D-glyceraldehyde 3-phosphate = D-erythrose 4-phosphate + beta-D-fructose 6-phosphate. The protein operates within carbohydrate degradation; pentose phosphate pathway; D-glyceraldehyde 3-phosphate and beta-D-fructose 6-phosphate from D-ribose 5-phosphate and D-xylulose 5-phosphate (non-oxidative stage): step 2/3. Transaldolase is important for the balance of metabolites in the pentose-phosphate pathway. The polypeptide is Probable transaldolase (Thermosipho africanus (strain TCF52B)).